The chain runs to 1296 residues: ABC transporter B family member 21 (1296 aa).

The disordered stretch occupies residues 1-59 (MDSVIESEEGLKVDSPNRADAETSNSKIHEEDEKELKTESDLKEEKKKTEKNKQEEDEK). A compositionally biased stretch (basic and acidic residues) spans 9–59 (EGLKVDSPNRADAETSNSKIHEEDEKELKTESDLKEEKKKTEKNKQEEDEK). A helical membrane pass occupies residues 77–97 (IILMILGTIGAVGNGLGFPIM). Residues 80-368 (MILGTIGAVG…ASPCLSAFAA (289 aa)) form the ABC transmembrane type-1 1 domain. The N-linked (GlcNAc...) asparagine glycan is linked to Asn113. A run of 5 helical transmembrane segments spans residues 128 to 148 (FVYLGLGTLVAALLQVSGWMI), 205 to 225 (IQLVSTFIGGFVIAFTEGWLL), 227 to 247 (LVMVSSIPLLVMSGAALAIVI), 307 to 327 (GLGLGTLNIVIFCTYALAVWY), and 336 to 356 (GYTGGQVLIIIFAVLTGSMSL). An ABC transporter 1 domain is found at 403 to 639 (IELNNVNFSY…PEGAYSQLIR (237 aa)). Asn409 carries an N-linked (GlcNAc...) asparagine glycan. 438–445 (GQSGSGKS) lines the ATP pocket. Residues Asn505, Asn519, and Asn590 are each glycosylated (N-linked (GlcNAc...) asparagine). Basic and acidic residues predominate over residues 640–662 (LQEDTKQTEDSTDEQKLSMESMK). A disordered region spans residues 640-672 (LQEDTKQTEDSTDEQKLSMESMKRSSLRKSSLS). 2 positions are modified to phosphoserine: Ser657 and Ser660. The ABC transmembrane type-1 2 domain occupies 730-1017 (LILGSIAAVL…SSSLSPDSSK (288 aa)). The next 2 membrane-spanning stretches (helical) occupy residues 731-751 (ILGSIAAVLNGVILPIFGILI) and 774-794 (IIFMLLGVASMVVFPAQTIFF). A glycan (N-linked (GlcNAc...) asparagine) is linked at Asn826. Helical transmembrane passes span 865-885 (VIAFVASWQLAFIVLAMLPLI), 952-972 (GIVSGIGFGVSFFVLFSSYAA), and 986-1006 (TTFDSVFRVFFALTMAAVAIS). Residues 1052 to 1289 (IELRHISFKY…KDGVYASLVQ (238 aa)) enclose the ABC transporter 2 domain. 1087–1094 (GESGSGKS) lines the ATP pocket. Residues Asn1141 and Asn1240 are each glycosylated (N-linked (GlcNAc...) asparagine).

Belongs to the ABC transporter superfamily. ABCB family. Multidrug resistance exporter (TC 3.A.1.201) subfamily.

It is found in the membrane. The chain is ABC transporter B family member 21 (ABCB21) from Arabidopsis thaliana (Mouse-ear cress).